The primary structure comprises 231 residues: Enolase-phosphatase E1 (231 aa).

Belongs to the HAD-like hydrolase superfamily. MasA/MtnC family. Monomer. Mg(2+) serves as cofactor.

The enzyme catalyses 5-methylsulfanyl-2,3-dioxopentyl phosphate + H2O = 1,2-dihydroxy-5-(methylsulfanyl)pent-1-en-3-one + phosphate. It participates in amino-acid biosynthesis; L-methionine biosynthesis via salvage pathway; L-methionine from S-methyl-5-thio-alpha-D-ribose 1-phosphate: step 3/6. The protein operates within amino-acid biosynthesis; L-methionine biosynthesis via salvage pathway; L-methionine from S-methyl-5-thio-alpha-D-ribose 1-phosphate: step 4/6. In terms of biological role, bifunctional enzyme that catalyzes the enolization of 2,3-diketo-5-methylthiopentyl-1-phosphate (DK-MTP-1-P) into the intermediate 2-hydroxy-3-keto-5-methylthiopentenyl-1-phosphate (HK-MTPenyl-1-P), which is then dephosphorylated to form the acireductone 1,2-dihydroxy-3-keto-5-methylthiopentene (DHK-MTPene). In Stenotrophomonas maltophilia (strain K279a), this protein is Enolase-phosphatase E1.